Here is a 444-residue protein sequence, read N- to C-terminus: Glucarate dehydratase (444 aa).

4 residues coordinate substrate: histidine 30, threonine 101, tyrosine 148, and lysine 203. Lysine 205 acts as the Proton acceptor in catalysis. 3 residues coordinate Mg(2+): aspartate 233, glutamate 264, and asparagine 287. A substrate-binding site is contributed by 233–235 (DPN). Residues asparagine 287, 337-339 (HSN), histidine 366, and arginine 420 contribute to the substrate site. Histidine 337 functions as the Proton acceptor in the catalytic mechanism.

It belongs to the mandelate racemase/muconate lactonizing enzyme family. GlucD subfamily. The cofactor is Mg(2+).

The enzyme catalyses D-glucarate = 5-dehydro-4-deoxy-D-glucarate + H2O. Its pathway is carbohydrate acid metabolism; D-glucarate degradation; 2,5-dioxopentanoate from D-glucarate: step 1/2. In terms of biological role, catalyzes the dehydration of glucarate to 5-keto-4-deoxy-D-glucarate (5-kdGluc). The chain is Glucarate dehydratase (gudD) from Acinetobacter baylyi (strain ATCC 33305 / BD413 / ADP1).